The sequence spans 382 residues: tRNA-specific 2-thiouridylase MnmA (382 aa).

ATP contacts are provided by residues 18 to 25 and Leu-44; that span reads AMSGGVDS. Cys-112 (nucleophile) is an active-site residue. The cysteines at positions 112 and 209 are disulfide-linked. ATP is bound at residue Gly-136. The interval 159–161 is interaction with tRNA; sequence RDQ. Cys-209 serves as the catalytic Cysteine persulfide intermediate.

This sequence belongs to the MnmA/TRMU family.

It localises to the cytoplasm. It catalyses the reaction S-sulfanyl-L-cysteinyl-[protein] + uridine(34) in tRNA + AH2 + ATP = 2-thiouridine(34) in tRNA + L-cysteinyl-[protein] + A + AMP + diphosphate + H(+). Its function is as follows. Catalyzes the 2-thiolation of uridine at the wobble position (U34) of tRNA, leading to the formation of s(2)U34. This chain is tRNA-specific 2-thiouridylase MnmA, found in Methylobacterium sp. (strain 4-46).